The primary structure comprises 1020 residues: Mastermind-like protein 1 (1020 aa).

A required for interaction with NOTCH proteins region spans residues 1-97 (MVLPTCPMAE…PAPASAPAAA (97 aa)). S45 is modified (phosphoserine). Residues 67–76 (KAKRAGKHRQ) show a composition bias toward basic residues. Residues 67 to 191 (KAKRAGKHRQ…TAGKHSLGLD (125 aa)) are disordered. The segment covering 77 to 99 (PPAAATAPVAAPAPASAPAAARL) has biased composition (low complexity). Basic and acidic residues predominate over residues 100 to 122 (DAADGPEHGRPVAHLHDTVKRSL). Residues 124–133 (SAASPQNGDQ) show a composition bias toward polar residues. Residues S127, S310, S321, and S367 each carry the phosphoserine modification. Disordered stretches follow at residues 335–522 (GASS…YGNT), 575–598 (PFRS…APAA), 663–686 (EKQQ…QSTF), 725–748 (SMGP…RGVA), 794–866 (QNAS…NPFT), and 888–959 (AMPS…RPGL). Over residues 344-369 (DSPSLGSSQTLFHTTSQPGVDNSSPN) the composition is skewed to polar residues. The span at 373–383 (ASAQAQSAQRA) shows a compositional bias: low complexity. Residues 399-410 (ELSSAHQLQQIA) show a composition bias toward polar residues. The span at 419 to 435 (LQNPQQAAPAPGPGQLA) shows a compositional bias: low complexity. Over residues 491–515 (PSHSNLLSHQSPSNLNQNPVNNQGS) the composition is skewed to polar residues. Over residues 588–598 (PSSVPVAAPAA) the composition is skewed to low complexity. Residues 794 to 818 (QNASTSAAYGQNSLGSASLSQQHSK) are compositionally biased toward polar residues. K827 is modified (N6-acetyllysine). Residues 837–864 (MGSQNASWQHQGMPNLSSQTSGNSSVNP) are compositionally biased toward polar residues. Low complexity predominate over residues 911-920 (SAQQRNSAPA). S1019 carries the phosphoserine modification.

The protein belongs to the mastermind family. Interacts (via N-terminus) with NOTCH1, NOTCH2, NOTCH3 and NOTCH4 (via ankyrin repeat region). Interacts (via N-terminus) with p53 (via DNA-binding region). Forms a DNA-binding complex with Notch proteins and RBPSUH/RBP-J kappa/CBF1. Also binds CREBBP/CBP and CDK8. Forms a complex with PRAG1, NOTCH1 and MAML1, in a MAML1-dependent manner. At E9.5, strongly expressed in the telencephalon, first branchial arch, forelimb buds and somites. By 10.5 dpc, continuously expressed in brain and spinal cord. Also expressed in first and second branchial arches and limb buds. By 11.5 dpc, expression in CNS is weak but increases in mesodermal tissues. At 14.5 dpc, detected in epithelial cells in trachea, esophagus and proximal and distal tubules of the developing lungs.

It is found in the nucleus speckle. Its function is as follows. Acts as a transcriptional coactivator for NOTCH proteins. Has been shown to amplify NOTCH-induced transcription of HES1. Enhances phosphorylation and proteolytic turnover of the NOTCH intracellular domain in the nucleus through interaction with CDK8. Binds to CREBBP/CBP which promotes nucleosome acetylation at NOTCH enhancers and activates transcription. Induces phosphorylation and localization of CREBBP to nuclear foci. Plays a role in hematopoietic development by regulating NOTCH-mediated lymphoid cell fate decisions. This is Mastermind-like protein 1 from Mus musculus (Mouse).